Reading from the N-terminus, the 241-residue chain is Ribonuclease PH (241 aa).

Phosphate is bound by residues arginine 89 and glycine 127–arginine 129.

The protein belongs to the RNase PH family. In terms of assembly, homohexameric ring arranged as a trimer of dimers.

The catalysed reaction is tRNA(n+1) + phosphate = tRNA(n) + a ribonucleoside 5'-diphosphate. Its function is as follows. Phosphorolytic 3'-5' exoribonuclease that plays an important role in tRNA 3'-end maturation. Removes nucleotide residues following the 3'-CCA terminus of tRNAs; can also add nucleotides to the ends of RNA molecules by using nucleoside diphosphates as substrates, but this may not be physiologically important. Probably plays a role in initiation of 16S rRNA degradation (leading to ribosome degradation) during starvation. The polypeptide is Ribonuclease PH (Xanthomonas euvesicatoria pv. vesicatoria (strain 85-10) (Xanthomonas campestris pv. vesicatoria)).